The chain runs to 350 residues: sn-1 oleoyl-lipid 12-desaturase (350 aa).

Transmembrane regions (helical) follow at residues Ala41 to Ile61 and Trp64 to Ile84. A Histidine box-1 motif is present at residues His86 to His90. The chain crosses the membrane as a helical span at residues Trp98–Trp118. The Histidine box-2 signature appears at His122–His126. The next 2 helical transmembrane spans lie at Val196–Ile216 and Phe219–Ile239. Residues His287 to Thr291 carry the Histidine box-3 motif.

The protein belongs to the fatty acid desaturase type 2 family. Fe(2+) serves as cofactor.

Its subcellular location is the membrane. The catalysed reaction is a 1-[(9Z)-octadecenoyl]-2-acyl-glycerolipid + 2 reduced [2Fe-2S]-[ferredoxin] + O2 + 2 H(+) = a 1-[(9Z,12Z)-octadecdienoyl]-2-acyl-glycerolipid + 2 oxidized [2Fe-2S]-[ferredoxin] + 2 H2O. It functions in the pathway lipid metabolism; polyunsaturated fatty acid biosynthesis. In terms of biological role, desaturase involved in fatty acid biosynthesis. Introduces a double bond at carbon 12 of oleoyl groups (18:1) attached to the sn-1 position of the glycerol moiety of membrane glycerolipids. In Anabaena variabilis, this protein is sn-1 oleoyl-lipid 12-desaturase.